Reading from the N-terminus, the 230-residue chain is Orotidine 5'-phosphate decarboxylase (230 aa).

Substrate contacts are provided by residues D10, K32, 59-68 (DLKYHDIPNT), T119, R180, Q189, G209, and R210. The Proton donor role is filled by K61.

Belongs to the OMP decarboxylase family. Type 1 subfamily. As to quaternary structure, homodimer.

It catalyses the reaction orotidine 5'-phosphate + H(+) = UMP + CO2. It participates in pyrimidine metabolism; UMP biosynthesis via de novo pathway; UMP from orotate: step 2/2. Functionally, catalyzes the decarboxylation of orotidine 5'-monophosphate (OMP) to uridine 5'-monophosphate (UMP). The polypeptide is Orotidine 5'-phosphate decarboxylase (Actinobacillus pleuropneumoniae serotype 5b (strain L20)).